A 108-amino-acid chain; its full sequence is Small ribosomal subunit protein bS6 (108 aa).

Belongs to the bacterial ribosomal protein bS6 family.

Its function is as follows. Binds together with bS18 to 16S ribosomal RNA. This Dichelobacter nodosus (strain VCS1703A) protein is Small ribosomal subunit protein bS6.